A 539-amino-acid chain; its full sequence is Probable 1,4-beta-D-glucan cellobiohydrolase B (539 aa).

Positions 1 to 26 (MLPSTISYRIYKNALFFAALFGAVQA) are cleaved as a signal peptide. Positions 27-461 (QKVGTSKAEV…SNIKVGPIGS (435 aa)) are catalytic. Asn-90 is a glycosylation site (N-linked (GlcNAc...) asparagine). The active-site Nucleophile is Glu-238. Glu-243 serves as the catalytic Proton donor. N-linked (GlcNAc...) asparagine glycosylation is found at Asn-296 and Asn-495. Residues 462 to 503 (TFNSGGSNPGGSTTTTKPATSTTTTKATTTATTNTTGPTGTG) are thr-rich linker. Over residues 462-503 (TFNSGGSNPGGSTTTTKPATSTTTTKATTTATTNTTGPTGTG) the composition is skewed to low complexity. The tract at residues 462–504 (TFNSGGSNPGGSTTTTKPATSTTTTKATTTATTNTTGPTGTGV) is disordered. Residues 503–539 (GVAQPWAQCGGIGYSGPTQCAAPYTCTKQNDYYSQCL) form the CBM1 domain. 2 disulfide bridges follow: Cys-511-Cys-528 and Cys-522-Cys-538.

Belongs to the glycosyl hydrolase 7 (cellulase C) family.

The protein localises to the secreted. The catalysed reaction is Hydrolysis of (1-&gt;4)-beta-D-glucosidic linkages in cellulose and cellotetraose, releasing cellobiose from the non-reducing ends of the chains.. Functionally, the biological conversion of cellulose to glucose generally requires three types of hydrolytic enzymes: (1) Endoglucanases which cut internal beta-1,4-glucosidic bonds; (2) Exocellobiohydrolases that cut the disaccharide cellobiose from the non-reducing end of the cellulose polymer chain; (3) Beta-1,4-glucosidases which hydrolyze the cellobiose and other short cello-oligosaccharides to glucose. The sequence is that of Probable 1,4-beta-D-glucan cellobiohydrolase B (cbhB) from Aspergillus clavatus (strain ATCC 1007 / CBS 513.65 / DSM 816 / NCTC 3887 / NRRL 1 / QM 1276 / 107).